A 646-amino-acid polypeptide reads, in one-letter code: DNA mismatch repair protein MutL (646 aa).

Disordered stretches follow at residues 356 to 380 (FENRTASNPPAEKPDEETDRVNENS) and 415 to 452 (TKNSEGLFDSEATSNEAASAEIESSEDDVRETEHAKPH). Residues 424–436 (SEATSNEAASAEI) show a composition bias toward low complexity.

This sequence belongs to the DNA mismatch repair MutL/HexB family.

In terms of biological role, this protein is involved in the repair of mismatches in DNA. It is required for dam-dependent methyl-directed DNA mismatch repair. May act as a 'molecular matchmaker', a protein that promotes the formation of a stable complex between two or more DNA-binding proteins in an ATP-dependent manner without itself being part of a final effector complex. The protein is DNA mismatch repair protein MutL of Staphylococcus carnosus (strain TM300).